The sequence spans 247 residues: Enolase-phosphatase E1 (247 aa).

Residues D12 and E14 each contribute to the Mg(2+) site. Residues S141–S142 and K175 contribute to the substrate site. D200 lines the Mg(2+) pocket.

It belongs to the HAD-like hydrolase superfamily. MasA/MtnC family. In terms of assembly, monomer. Mg(2+) serves as cofactor.

The protein localises to the cytoplasm. It localises to the nucleus. It catalyses the reaction 5-methylsulfanyl-2,3-dioxopentyl phosphate + H2O = 1,2-dihydroxy-5-(methylsulfanyl)pent-1-en-3-one + phosphate. It participates in amino-acid biosynthesis; L-methionine biosynthesis via salvage pathway; L-methionine from S-methyl-5-thio-alpha-D-ribose 1-phosphate: step 3/6. Its pathway is amino-acid biosynthesis; L-methionine biosynthesis via salvage pathway; L-methionine from S-methyl-5-thio-alpha-D-ribose 1-phosphate: step 4/6. Bifunctional enzyme that catalyzes the enolization of 2,3-diketo-5-methylthiopentyl-1-phosphate (DK-MTP-1-P) into the intermediate 2-hydroxy-3-keto-5-methylthiopentenyl-1-phosphate (HK-MTPenyl-1-P), which is then dephosphorylated to form the acireductone 1,2-dihydroxy-3-keto-5-methylthiopentene (DHK-MTPene). The polypeptide is Enolase-phosphatase E1 (Drosophila willistoni (Fruit fly)).